The following is a 214-amino-acid chain: Phosphoheptose isomerase (214 aa).

An SIS domain is found at 51–209 (IASTFEDGGK…IDLVERLLGY (159 aa)). Position 66–68 (66–68 (NGG)) interacts with substrate. Positions 75 and 79 each coordinate Zn(2+). Substrate is bound by residues Glu-79, 110–111 (ND), 136–138 (STS), Ser-141, and Gln-189. Residues Gln-189 and His-197 each contribute to the Zn(2+) site.

The protein belongs to the SIS family. GmhA subfamily. Zn(2+) is required as a cofactor.

It localises to the cytoplasm. The enzyme catalyses 2 D-sedoheptulose 7-phosphate = D-glycero-alpha-D-manno-heptose 7-phosphate + D-glycero-beta-D-manno-heptose 7-phosphate. The protein operates within carbohydrate biosynthesis; D-glycero-D-manno-heptose 7-phosphate biosynthesis; D-glycero-alpha-D-manno-heptose 7-phosphate and D-glycero-beta-D-manno-heptose 7-phosphate from sedoheptulose 7-phosphate: step 1/1. Its function is as follows. Catalyzes the isomerization of sedoheptulose 7-phosphate in D-glycero-D-manno-heptose 7-phosphate. The polypeptide is Phosphoheptose isomerase (Chlorobium limicola (strain DSM 245 / NBRC 103803 / 6330)).